The chain runs to 157 residues: 2-C-methyl-D-erythritol 2,4-cyclodiphosphate synthase (157 aa).

The a divalent metal cation site is built by D8 and H10. 4-CDP-2-C-methyl-D-erythritol 2-phosphate-binding positions include 8-10 (DVH) and 34-35 (HS). H42 contributes to the a divalent metal cation binding site. Residues 56-58 (DIG), 132-135 (TTNE), and R142 contribute to the 4-CDP-2-C-methyl-D-erythritol 2-phosphate site.

It belongs to the IspF family. Homotrimer. A divalent metal cation serves as cofactor.

The enzyme catalyses 4-CDP-2-C-methyl-D-erythritol 2-phosphate = 2-C-methyl-D-erythritol 2,4-cyclic diphosphate + CMP. The protein operates within isoprenoid biosynthesis; isopentenyl diphosphate biosynthesis via DXP pathway; isopentenyl diphosphate from 1-deoxy-D-xylulose 5-phosphate: step 4/6. Functionally, involved in the biosynthesis of isopentenyl diphosphate (IPP) and dimethylallyl diphosphate (DMAPP), two major building blocks of isoprenoid compounds. Catalyzes the conversion of 4-diphosphocytidyl-2-C-methyl-D-erythritol 2-phosphate (CDP-ME2P) to 2-C-methyl-D-erythritol 2,4-cyclodiphosphate (ME-CPP) with a corresponding release of cytidine 5-monophosphate (CMP). The sequence is that of 2-C-methyl-D-erythritol 2,4-cyclodiphosphate synthase from Chlorobaculum tepidum (strain ATCC 49652 / DSM 12025 / NBRC 103806 / TLS) (Chlorobium tepidum).